Here is a 188-residue protein sequence, read N- to C-terminus: Probable nicotinate-nucleotide adenylyltransferase (188 aa).

This sequence belongs to the NadD family.

The enzyme catalyses nicotinate beta-D-ribonucleotide + ATP + H(+) = deamido-NAD(+) + diphosphate. The protein operates within cofactor biosynthesis; NAD(+) biosynthesis; deamido-NAD(+) from nicotinate D-ribonucleotide: step 1/1. Functionally, catalyzes the reversible adenylation of nicotinate mononucleotide (NaMN) to nicotinic acid adenine dinucleotide (NaAD). This chain is Probable nicotinate-nucleotide adenylyltransferase, found in Listeria innocua serovar 6a (strain ATCC BAA-680 / CLIP 11262).